The chain runs to 461 residues: Homocitrate synthase (461 aa).

The Pyruvate carboxyltransferase domain occupies 4–259; that stretch reads VGILDSTLRE…IEVVKLDKLQ (256 aa). Arginine 12 is a 2-oxoglutarate binding site. Glutamate 13 lines the Mg(2+) pocket. 2-oxoglutarate is bound by residues histidine 76, arginine 136, and threonine 170. Positions 198 and 200 each coordinate Mg(2+). Catalysis depends on histidine 292, which acts as the Proton acceptor.

This sequence belongs to the alpha-IPM synthase/homocitrate synthase family. Homocitrate synthase LYS20/LYS21 subfamily. It depends on Mg(2+) as a cofactor. Requires Mn(2+) as cofactor.

It carries out the reaction acetyl-CoA + 2-oxoglutarate + H2O = (2R)-homocitrate + CoA + H(+). Its pathway is amino-acid biosynthesis; L-lysine biosynthesis via AAA pathway; L-alpha-aminoadipate from 2-oxoglutarate: step 1/5. Functionally, catalyzes the aldol-type condensation of 2-oxoglutarate with acetyl-CoA to yield homocitrate. Carries out the first step of the alpha-aminoadipate (AAA) lysine biosynthesis pathway. In Saccharolobus islandicus (strain L.S.2.15 / Lassen #1) (Sulfolobus islandicus), this protein is Homocitrate synthase.